The primary structure comprises 217 residues: Guanylate kinase (217 aa).

A compositionally biased stretch (low complexity) spans 1-10 (MAVSSTTLSS). Residues 1-30 (MAVSSTTLSSPTPPECLQQQEAPRPPATRG) are disordered. Residues 30 to 208 (GRLVVLTGPS…ALQELEALLY (179 aa)) form the Guanylate kinase-like domain. 37–44 (GPSGVGKG) is an ATP binding site.

Belongs to the guanylate kinase family.

The protein localises to the cytoplasm. It carries out the reaction GMP + ATP = GDP + ADP. The catalysed reaction is dZMP + ATP = dZDP + ADP. Its pathway is purine metabolism. Essential for recycling GMP and indirectly, cGMP. In terms of biological role, (Microbial infection) Catalyzes the phosphorylation of dZMP to dZDP, when the bacterium is infected by a phage that produces the substrate for the synthesis of dZTP (2- amino-2'-deoxyadenosine 5'-triphosphate), which is then used by the phage as a DNA polymerase substrate. In Synechococcus sp. (strain JA-3-3Ab) (Cyanobacteria bacterium Yellowstone A-Prime), this protein is Guanylate kinase.